A 397-amino-acid chain; its full sequence is Subtilisin-like protease 12 (397 aa).

An N-terminal signal peptide occupies residues 1–19 (MSIFKMMLIYFAILWVVNA). A propeptide spanning residues 20–116 (AQLLDIDPQG…VEPNKEMQVA (97 aa)) is cleaved from the precursor. The 81-residue stretch at 35–115 (YIVVMKDRVS…FVEPNKEMQV (81 aa)) folds into the Inhibitor I9 domain. Asn123, Asn136, and Asn150 each carry an N-linked (GlcNAc...) asparagine glycan. One can recognise a Peptidase S8 domain in the interval 125-397 (TWGLSRISHK…NKLLYNGSGA (273 aa)). Residues Asp157 and His188 each act as charge relay system in the active site. N-linked (GlcNAc...) asparagine glycosylation is found at Asn249, Asn305, and Asn334. The active-site Charge relay system is Ser343. Residues Asn385 and Asn393 are each glycosylated (N-linked (GlcNAc...) asparagine).

It belongs to the peptidase S8 family.

The protein localises to the secreted. Secreted subtilisin-like serine protease with keratinolytic activity that contributes to pathogenicity. The protein is Subtilisin-like protease 12 (SUB12) of Trichophyton verrucosum (strain HKI 0517).